We begin with the raw amino-acid sequence, 243 residues long: Ubiquinone/menaquinone biosynthesis C-methyltransferase UbiE (243 aa).

S-adenosyl-L-methionine-binding positions include Thr69, Asp90, and 116–117 (DA).

The protein belongs to the class I-like SAM-binding methyltransferase superfamily. MenG/UbiE family.

It catalyses the reaction a 2-demethylmenaquinol + S-adenosyl-L-methionine = a menaquinol + S-adenosyl-L-homocysteine + H(+). The catalysed reaction is a 2-methoxy-6-(all-trans-polyprenyl)benzene-1,4-diol + S-adenosyl-L-methionine = a 5-methoxy-2-methyl-3-(all-trans-polyprenyl)benzene-1,4-diol + S-adenosyl-L-homocysteine + H(+). It participates in quinol/quinone metabolism; menaquinone biosynthesis; menaquinol from 1,4-dihydroxy-2-naphthoate: step 2/2. The protein operates within cofactor biosynthesis; ubiquinone biosynthesis. Its function is as follows. Methyltransferase required for the conversion of demethylmenaquinol (DMKH2) to menaquinol (MKH2) and the conversion of 2-polyprenyl-6-methoxy-1,4-benzoquinol (DDMQH2) to 2-polyprenyl-3-methyl-6-methoxy-1,4-benzoquinol (DMQH2). This is Ubiquinone/menaquinone biosynthesis C-methyltransferase UbiE from Burkholderia ambifaria (strain MC40-6).